We begin with the raw amino-acid sequence, 513 residues long: Glycerol-3-phosphate dehydrogenase (513 aa).

An FAD-binding site is contributed by 16 to 44 (DVAVIGGGINGVGIAADAAGRGLSVFLCE).

Belongs to the FAD-dependent glycerol-3-phosphate dehydrogenase family. FAD is required as a cofactor.

The protein localises to the cytoplasm. It catalyses the reaction a quinone + sn-glycerol 3-phosphate = dihydroxyacetone phosphate + a quinol. The sequence is that of Glycerol-3-phosphate dehydrogenase (glpD) from Pseudomonas tolaasii.